A 424-amino-acid polypeptide reads, in one-letter code: Glutamyl-tRNA reductase (424 aa).

Residues 49–52 (TCNR), Ser-105, 110–112 (EPQ), and Gln-116 each bind substrate. Cys-50 functions as the Nucleophile in the catalytic mechanism. Residue 185 to 190 (GSGETA) participates in NADP(+) binding.

Belongs to the glutamyl-tRNA reductase family. As to quaternary structure, homodimer.

The catalysed reaction is (S)-4-amino-5-oxopentanoate + tRNA(Glu) + NADP(+) = L-glutamyl-tRNA(Glu) + NADPH + H(+). It participates in porphyrin-containing compound metabolism; protoporphyrin-IX biosynthesis; 5-aminolevulinate from L-glutamyl-tRNA(Glu): step 1/2. Catalyzes the NADPH-dependent reduction of glutamyl-tRNA(Glu) to glutamate 1-semialdehyde (GSA). In Legionella pneumophila (strain Lens), this protein is Glutamyl-tRNA reductase.